The following is a 160-amino-acid chain: Large ribosomal subunit protein uL11 (160 aa).

Belongs to the universal ribosomal protein uL11 family. As to quaternary structure, part of the ribosomal stalk of the 50S ribosomal subunit. Interacts with L10 and the large rRNA to form the base of the stalk. L10 forms an elongated spine to which L12 dimers bind in a sequential fashion forming a multimeric L10(L12)X complex.

In terms of biological role, forms part of the ribosomal stalk which helps the ribosome interact with GTP-bound translation factors. The sequence is that of Large ribosomal subunit protein uL11 from Nanoarchaeum equitans (strain Kin4-M).